Here is a 394-residue protein sequence, read N- to C-terminus: Lipid-A-disaccharide synthase (394 aa).

This sequence belongs to the LpxB family.

It catalyses the reaction a lipid X + a UDP-2-N,3-O-bis[(3R)-3-hydroxyacyl]-alpha-D-glucosamine = a lipid A disaccharide + UDP + H(+). It functions in the pathway bacterial outer membrane biogenesis; LPS lipid A biosynthesis. Functionally, condensation of UDP-2,3-diacylglucosamine and 2,3-diacylglucosamine-1-phosphate to form lipid A disaccharide, a precursor of lipid A, a phosphorylated glycolipid that anchors the lipopolysaccharide to the outer membrane of the cell. The chain is Lipid-A-disaccharide synthase (lpxB) from Synechocystis sp. (strain ATCC 27184 / PCC 6803 / Kazusa).